A 185-amino-acid polypeptide reads, in one-letter code: ATP-dependent protease subunit HslV (185 aa).

Thr-12 is an active-site residue. Na(+) is bound by residues Ala-168, Cys-171, and Thr-174.

This sequence belongs to the peptidase T1B family. HslV subfamily. In terms of assembly, a double ring-shaped homohexamer of HslV is capped on each side by a ring-shaped HslU homohexamer. The assembly of the HslU/HslV complex is dependent on binding of ATP.

It is found in the cytoplasm. The enzyme catalyses ATP-dependent cleavage of peptide bonds with broad specificity.. Allosterically activated by HslU binding. Functionally, protease subunit of a proteasome-like degradation complex believed to be a general protein degrading machinery. This is ATP-dependent protease subunit HslV from Ruegeria pomeroyi (strain ATCC 700808 / DSM 15171 / DSS-3) (Silicibacter pomeroyi).